The chain runs to 129 residues: Ribosome-binding factor A (129 aa).

This sequence belongs to the RbfA family. As to quaternary structure, monomer. Binds 30S ribosomal subunits, but not 50S ribosomal subunits or 70S ribosomes.

The protein localises to the cytoplasm. Functionally, one of several proteins that assist in the late maturation steps of the functional core of the 30S ribosomal subunit. Associates with free 30S ribosomal subunits (but not with 30S subunits that are part of 70S ribosomes or polysomes). Required for efficient processing of 16S rRNA. May interact with the 5'-terminal helix region of 16S rRNA. In Actinobacillus succinogenes (strain ATCC 55618 / DSM 22257 / CCUG 43843 / 130Z), this protein is Ribosome-binding factor A.